A 292-amino-acid polypeptide reads, in one-letter code: Lipoyl synthase (292 aa).

7 residues coordinate [4Fe-4S] cluster: C38, C43, C49, C64, C68, C71, and S277. The Radical SAM core domain occupies 50-266 (WSKGTATFML…KNRAESLGFR (217 aa)).

The protein belongs to the radical SAM superfamily. Lipoyl synthase family. It depends on [4Fe-4S] cluster as a cofactor.

The protein resides in the cytoplasm. The catalysed reaction is [[Fe-S] cluster scaffold protein carrying a second [4Fe-4S](2+) cluster] + N(6)-octanoyl-L-lysyl-[protein] + 2 oxidized [2Fe-2S]-[ferredoxin] + 2 S-adenosyl-L-methionine + 4 H(+) = [[Fe-S] cluster scaffold protein] + N(6)-[(R)-dihydrolipoyl]-L-lysyl-[protein] + 4 Fe(3+) + 2 hydrogen sulfide + 2 5'-deoxyadenosine + 2 L-methionine + 2 reduced [2Fe-2S]-[ferredoxin]. It functions in the pathway protein modification; protein lipoylation via endogenous pathway; protein N(6)-(lipoyl)lysine from octanoyl-[acyl-carrier-protein]: step 2/2. In terms of biological role, catalyzes the radical-mediated insertion of two sulfur atoms into the C-6 and C-8 positions of the octanoyl moiety bound to the lipoyl domains of lipoate-dependent enzymes, thereby converting the octanoylated domains into lipoylated derivatives. This chain is Lipoyl synthase, found in Chlorobium limicola (strain DSM 245 / NBRC 103803 / 6330).